Here is a 347-residue protein sequence, read N- to C-terminus: tRNA pseudouridine synthase D (347 aa).

Catalysis depends on Asp-81, which acts as the Nucleophile. Residues 158–305 (GVPNYFGSQR…RHDRRDIALK (148 aa)) enclose the TRUD domain.

It belongs to the pseudouridine synthase TruD family.

It carries out the reaction uridine(13) in tRNA = pseudouridine(13) in tRNA. In terms of biological role, responsible for synthesis of pseudouridine from uracil-13 in transfer RNAs. In Vibrio campbellii (strain ATCC BAA-1116), this protein is tRNA pseudouridine synthase D.